We begin with the raw amino-acid sequence, 154 residues long: Oleosin 16.4 kDa (154 aa).

Ala2 is modified (N-acetylalanine). The interval 2-33 is polar; it reads ADRDRSYRTFDQVVRGDRTNYQSGPSTTQVLT. Helical transmembrane passes span 31-51, 65-85, and 86-106; these read VLTVLTLLPIGGTLLALAGLT, LFVIFSPVLVPAAIAVFMAVA, and GFLSSGAFGLTGLSSLSYVFN. The segment at 34–105 is hydrophobic; it reads VLTLLPIGGT…TGLSSLSYVF (72 aa).

The protein belongs to the oleosin family.

It localises to the lipid droplet. It is found in the membrane. In terms of biological role, may have a structural role to stabilize the lipid body during desiccation of the seed by preventing coalescence of the oil. Probably interacts with both lipid and phospholipid moieties of lipid bodies. May also provide recognition signals for specific lipase anchorage in lipolysis during seedling growth. This is Oleosin 16.4 kDa (MATP7) from Gossypium hirsutum (Upland cotton).